Consider the following 311-residue polypeptide: Porphobilinogen deaminase (311 aa).

At Cys-242 the chain carries S-(dipyrrolylmethanemethyl)cysteine.

This sequence belongs to the HMBS family. In terms of assembly, monomer. The cofactor is dipyrromethane.

The enzyme catalyses 4 porphobilinogen + H2O = hydroxymethylbilane + 4 NH4(+). It functions in the pathway porphyrin-containing compound metabolism; protoporphyrin-IX biosynthesis; coproporphyrinogen-III from 5-aminolevulinate: step 2/4. Functionally, tetrapolymerization of the monopyrrole PBG into the hydroxymethylbilane pre-uroporphyrinogen in several discrete steps. The protein is Porphobilinogen deaminase (hemC) of Neisseria meningitidis serogroup A / serotype 4A (strain DSM 15465 / Z2491).